We begin with the raw amino-acid sequence, 363 residues long: Isopentenyl-diphosphate delta-isomerase (363 aa).

Position 15-16 (15-16 (RK)) interacts with substrate. FMN-binding positions include serine 73, 74-76 (SMT), serine 104, and asparagine 133. 104–106 (SMR) contacts substrate. Glutamine 168 is a substrate binding site. Residue glutamate 169 coordinates Mg(2+). Residues lysine 200, threonine 230, and 313 to 314 (AG) contribute to the FMN site.

It belongs to the IPP isomerase type 2 family. As to quaternary structure, homooctamer. Dimer of tetramers. FMN serves as cofactor. Requires NADPH as cofactor. Mg(2+) is required as a cofactor.

It localises to the cytoplasm. It carries out the reaction isopentenyl diphosphate = dimethylallyl diphosphate. In terms of biological role, involved in the biosynthesis of isoprenoids. Catalyzes the 1,3-allylic rearrangement of the homoallylic substrate isopentenyl (IPP) to its allylic isomer, dimethylallyl diphosphate (DMAPP). The sequence is that of Isopentenyl-diphosphate delta-isomerase from Chlorobium phaeobacteroides (strain DSM 266 / SMG 266 / 2430).